Here is a 729-residue protein sequence, read N- to C-terminus: Isocitrate dehydrogenase [NADP] (729 aa).

The NADP(+) site is built by asparagine 83 and serine 85. 5 residues coordinate D-threo-isocitrate: serine 121, asparagine 124, arginine 128, arginine 134, and lysine 244. Position 124 (asparagine 124) interacts with NADP(+). Aspartate 337 lines the Mg(2+) pocket. Positions 407 and 534 each coordinate D-threo-isocitrate. Mg(2+)-binding residues include aspartate 535 and aspartate 539. Residues serine 572, histidine 576, arginine 587, aspartate 589, and arginine 636 each contribute to the NADP(+) site.

Belongs to the monomeric-type IDH family. As to quaternary structure, monomer. Requires Mg(2+) as cofactor. Mn(2+) is required as a cofactor.

The enzyme catalyses D-threo-isocitrate + NADP(+) = 2-oxoglutarate + CO2 + NADPH. Functionally, catalyzes the oxidative decarboxylation of isocitrate to 2-oxoglutarate and carbon dioxide with the concomitant reduction of NADP(+). The sequence is that of Isocitrate dehydrogenase [NADP] from Corynebacterium efficiens (strain DSM 44549 / YS-314 / AJ 12310 / JCM 11189 / NBRC 100395).